A 321-amino-acid polypeptide reads, in one-letter code: Olfactory receptor 3A3 (321 aa).

Residues methionine 1–proline 34 lie on the Extracellular side of the membrane. N-linked (GlcNAc...) asparagine glycosylation occurs at asparagine 14. Residues valine 35–valine 58 form a helical membrane-spanning segment. Over leucine 59–alanine 66 the chain is Cytoplasmic. The chain crosses the membrane as a helical span at residues proline 67 to proline 88. Over alanine 89 to glutamine 109 the chain is Extracellular. Cysteine 106 and cysteine 198 are oxidised to a cystine. Residues leucine 110–tyrosine 129 traverse the membrane as a helical segment. At aspartate 130–valine 149 the chain is on the cytoplasmic side. A helical transmembrane segment spans residues glutamine 150 to threonine 167. Topologically, residues histidine 168–glutamate 205 are extracellular. The chain crosses the membrane as a helical span at residues leucine 206–alanine 228. The Cytoplasmic segment spans residues histidine 229–lysine 245. The chain crosses the membrane as a helical span at residues alanine 246 to tyrosine 268. Over methionine 269–lysine 281 the chain is Extracellular. Residues glycine 282–leucine 301 form a helical membrane-spanning segment. The Cytoplasmic segment spans residues arginine 302 to threonine 321.

This sequence belongs to the G-protein coupled receptor 1 family.

It localises to the cell membrane. In terms of biological role, odorant receptor. The chain is Olfactory receptor 3A3 (OR3A3) from Homo sapiens (Human).